The sequence spans 367 residues: Phospho-N-acetylmuramoyl-pentapeptide-transferase (367 aa).

Helical transmembrane passes span 16–36, 62–82, 87–107, 125–145, 158–178, 190–210, 214–234, 240–260, 264–284, and 326–346; these read LLLAAAAFVLTLIIGGWWVRF, TMGGIMIVSTVLILTILFNLV, MLLPLGVMVSFAVLGAIDDWL, FWIMMAVAFVASLALYLPQPY, VGEVNIGLWFIPIAVLIIVFI, SLAGWNLTLAFGAYGVITFLA, LTNLMAFCFTVVGACAAFLWY, QVFMGDLGALALGATLAVVAL, QWLLLPVIGIVFVVEALSTMI, and FVLIGTVAAMVGISLALIFGP.

It belongs to the glycosyltransferase 4 family. MraY subfamily. Mg(2+) is required as a cofactor.

Its subcellular location is the cell membrane. The enzyme catalyses UDP-N-acetyl-alpha-D-muramoyl-L-alanyl-gamma-D-glutamyl-meso-2,6-diaminopimeloyl-D-alanyl-D-alanine + di-trans,octa-cis-undecaprenyl phosphate = di-trans,octa-cis-undecaprenyl diphospho-N-acetyl-alpha-D-muramoyl-L-alanyl-D-glutamyl-meso-2,6-diaminopimeloyl-D-alanyl-D-alanine + UMP. It functions in the pathway cell wall biogenesis; peptidoglycan biosynthesis. In terms of biological role, catalyzes the initial step of the lipid cycle reactions in the biosynthesis of the cell wall peptidoglycan: transfers peptidoglycan precursor phospho-MurNAc-pentapeptide from UDP-MurNAc-pentapeptide onto the lipid carrier undecaprenyl phosphate, yielding undecaprenyl-pyrophosphoryl-MurNAc-pentapeptide, known as lipid I. The chain is Phospho-N-acetylmuramoyl-pentapeptide-transferase from Chloroflexus aurantiacus (strain ATCC 29366 / DSM 635 / J-10-fl).